The primary structure comprises 96 residues: Glutamyl-tRNA(Gln) amidotransferase subunit C (96 aa).

This sequence belongs to the GatC family. In terms of assembly, heterotrimer of A, B and C subunits.

It catalyses the reaction L-glutamyl-tRNA(Gln) + L-glutamine + ATP + H2O = L-glutaminyl-tRNA(Gln) + L-glutamate + ADP + phosphate + H(+). The catalysed reaction is L-aspartyl-tRNA(Asn) + L-glutamine + ATP + H2O = L-asparaginyl-tRNA(Asn) + L-glutamate + ADP + phosphate + 2 H(+). Allows the formation of correctly charged Asn-tRNA(Asn) or Gln-tRNA(Gln) through the transamidation of misacylated Asp-tRNA(Asn) or Glu-tRNA(Gln) in organisms which lack either or both of asparaginyl-tRNA or glutaminyl-tRNA synthetases. The reaction takes place in the presence of glutamine and ATP through an activated phospho-Asp-tRNA(Asn) or phospho-Glu-tRNA(Gln). The protein is Glutamyl-tRNA(Gln) amidotransferase subunit C of Halalkalibacterium halodurans (strain ATCC BAA-125 / DSM 18197 / FERM 7344 / JCM 9153 / C-125) (Bacillus halodurans).